Reading from the N-terminus, the 173-residue chain is Ribosome maturation factor RimM (173 aa).

The region spanning 93 to 166 (EDEYLVSDMI…KMLVDTIEGM (74 aa)) is the PRC barrel domain.

The protein belongs to the RimM family. Binds ribosomal protein uS19.

The protein localises to the cytoplasm. An accessory protein needed during the final step in the assembly of 30S ribosomal subunit, possibly for assembly of the head region. Essential for efficient processing of 16S rRNA. May be needed both before and after RbfA during the maturation of 16S rRNA. It has affinity for free ribosomal 30S subunits but not for 70S ribosomes. This Fusobacterium nucleatum subsp. nucleatum (strain ATCC 25586 / DSM 15643 / BCRC 10681 / CIP 101130 / JCM 8532 / KCTC 2640 / LMG 13131 / VPI 4355) protein is Ribosome maturation factor RimM.